The following is a 143-amino-acid chain: D-aminoacyl-tRNA deacylase (143 aa).

The Gly-cisPro motif, important for rejection of L-amino acids motif lies at 135–136 (GP).

This sequence belongs to the DTD family. As to quaternary structure, homodimer.

It is found in the cytoplasm. The catalysed reaction is glycyl-tRNA(Ala) + H2O = tRNA(Ala) + glycine + H(+). It carries out the reaction a D-aminoacyl-tRNA + H2O = a tRNA + a D-alpha-amino acid + H(+). In terms of biological role, an aminoacyl-tRNA editing enzyme that deacylates mischarged D-aminoacyl-tRNAs. Also deacylates mischarged glycyl-tRNA(Ala), protecting cells against glycine mischarging by AlaRS. Acts via tRNA-based rather than protein-based catalysis; rejects L-amino acids rather than detecting D-amino acids in the active site. By recycling D-aminoacyl-tRNA to D-amino acids and free tRNA molecules, this enzyme counteracts the toxicity associated with the formation of D-aminoacyl-tRNA entities in vivo and helps enforce protein L-homochirality. This chain is D-aminoacyl-tRNA deacylase, found in Mycobacterium marinum (strain ATCC BAA-535 / M).